The following is a 717-amino-acid chain: MRKILKLKIGREDLILETGLLAKQANGAVLATYGGSTVLATVCCSDSIRENLDFVPLSVEYNEKYYAAGKIPGGFIKREGKPKDKEVLVSRLIDRPMRPLFDKRFGREIQVVPTTLSTDQMNPPDIVGMNAAFTAVFLSDIPFNGPIAAVRIAYLNDEFIVNPSFDEIQDSVLDIVVAGSLDGITMVEGGANEVSEEILLDAIDKAYAYIKQICDLQKEFIYLIGEREKLPLAYEEKVFEFKDDLRSLIYSELKDACFVRGKLNRDKAIKLVKQKAYEHFSSLEQINDENEILFYKACDDFEQEIVRKSILEDNLRTDGRTPTQIRDIIAEVDLLKRTHGSALFTRGETQALAVTTLGTSIDEQVMDDIDGDKRLNFMLHYNFPPFSVGETGRLMTGRREIGHGHLAQRSLEAMLPKKDDFPYTIRVVSEVLESNGSSSMATVCSGSMSLMAAGVPVKEQVAGIAMGLISNDDKYVILSDILGEEDHLGDMDFKVAGTKNGITGFQMDIKISNVTKQLMRDALEQARIGRMHILSIMDSVISSSRGDISVNAPKIVQLQIDIDKISLVIGSTGKTVKAITDEFEVRVQIEQDGRITLFGTDNLKMQKAKAKIESIVREPKVGEIYDGIVKKINSFGAFIELTPTKEGFLSNRSRSRDDRYGSDIRHSRYSNRNSRYGRDNRSSFSMRFPRLEEGQIVKVRISDIDKFGKIELELARD.

Residues Asp486 and Asp492 each contribute to the Mg(2+) site. Residues 553–612 (PKIVQLQIDIDKISLVIGSTGKTVKAITDEFEVRVQIEQDGRITLFGTDNLKMQKAKAKI) form the KH domain. Positions 622-715 (GEIYDGIVKK…KFGKIELELA (94 aa)) constitute an S1 motif domain. A disordered region spans residues 650–681 (SNRSRSRDDRYGSDIRHSRYSNRNSRYGRDNR). Positions 654 to 666 (RSRDDRYGSDIRH) are enriched in basic and acidic residues.

The protein belongs to the polyribonucleotide nucleotidyltransferase family. The cofactor is Mg(2+).

The protein resides in the cytoplasm. It catalyses the reaction RNA(n+1) + phosphate = RNA(n) + a ribonucleoside 5'-diphosphate. Functionally, involved in mRNA degradation. Catalyzes the phosphorolysis of single-stranded polyribonucleotides processively in the 3'- to 5'-direction. This chain is Polyribonucleotide nucleotidyltransferase, found in Borrelia duttonii (strain Ly).